The chain runs to 166 residues: UBA-like domain-containing protein 2 (166 aa).

The interval 120–166 is disordered; sequence QQPVWLPPASPTTHLHHHHHHPQPVWPPNSQPTGGPQKAMAAMDGQR.

The protein belongs to the UBALD family.

The chain is UBA-like domain-containing protein 2 (ubald2) from Xenopus tropicalis (Western clawed frog).